The following is a 321-amino-acid chain: tRNA U34 carboxymethyltransferase (321 aa).

Carboxy-S-adenosyl-L-methionine is bound by residues K90, W104, K109, G129, 151-153, 180-181, M195, Y199, and R314; these read DPT and IE.

The protein belongs to the class I-like SAM-binding methyltransferase superfamily. CmoB family. As to quaternary structure, homotetramer.

The catalysed reaction is carboxy-S-adenosyl-L-methionine + 5-hydroxyuridine(34) in tRNA = 5-carboxymethoxyuridine(34) in tRNA + S-adenosyl-L-homocysteine + H(+). Catalyzes carboxymethyl transfer from carboxy-S-adenosyl-L-methionine (Cx-SAM) to 5-hydroxyuridine (ho5U) to form 5-carboxymethoxyuridine (cmo5U) at position 34 in tRNAs. The sequence is that of tRNA U34 carboxymethyltransferase from Pasteurella multocida (strain Pm70).